A 341-amino-acid chain; its full sequence is Biotin synthase (341 aa).

Residues 40–267 (AEIQVSTLLS…RSMVRLSAGR (228 aa)) enclose the Radical SAM core domain. [4Fe-4S] cluster-binding residues include cysteine 55, cysteine 59, and cysteine 62. [2Fe-2S] cluster contacts are provided by cysteine 99, cysteine 130, cysteine 190, and arginine 262.

The protein belongs to the radical SAM superfamily. Biotin synthase family. As to quaternary structure, homodimer. [4Fe-4S] cluster is required as a cofactor. The cofactor is [2Fe-2S] cluster.

The enzyme catalyses (4R,5S)-dethiobiotin + (sulfur carrier)-SH + 2 reduced [2Fe-2S]-[ferredoxin] + 2 S-adenosyl-L-methionine = (sulfur carrier)-H + biotin + 2 5'-deoxyadenosine + 2 L-methionine + 2 oxidized [2Fe-2S]-[ferredoxin]. It participates in cofactor biosynthesis; biotin biosynthesis; biotin from 7,8-diaminononanoate: step 2/2. Catalyzes the conversion of dethiobiotin (DTB) to biotin by the insertion of a sulfur atom into dethiobiotin via a radical-based mechanism. This is Biotin synthase from Xylella fastidiosa (strain M23).